The primary structure comprises 324 residues: Serine/threonine-protein phosphatase PP1 isozyme 8 (324 aa).

Positions 66, 68, 94, and 126 each coordinate Mn(2+). Residue His-127 is the Proton donor of the active site. Mn(2+) contacts are provided by His-175 and His-250.

It belongs to the PPP phosphatase family. PP-1 subfamily. Requires Mn(2+) as cofactor. In terms of tissue distribution, expressed in roots, rosettes and flowers.

Its subcellular location is the nucleus. The protein resides in the cytoplasm. The catalysed reaction is O-phospho-L-seryl-[protein] + H2O = L-seryl-[protein] + phosphate. It carries out the reaction O-phospho-L-threonyl-[protein] + H2O = L-threonyl-[protein] + phosphate. With respect to regulation, phosphatase activity is strongly reduced by the protein phosphatase inhibitor 2 (I-2). In terms of biological role, serine/threonine-protein phosphatase that possesses phosphatase activity toward para-nitrophenyl phosphate (pNPP) in vitro. This is Serine/threonine-protein phosphatase PP1 isozyme 8 from Arabidopsis thaliana (Mouse-ear cress).